Here is a 159-residue protein sequence, read N- to C-terminus: Sperm acrosome-associated protein 5 (159 aa).

The N-terminal stretch at 1–21 (MKAWGTVVVTLATLMVVTVDA) is a signal peptide. Residues 22-150 (KIYERCELAA…SEWLKGCDMH (129 aa)) form the C-type lysozyme domain. 4 disulfide bridges follow: Cys-27–Cys-147, Cys-51–Cys-135, Cys-85–Cys-100, and Cys-96–Cys-114. Glu-56 is a catalytic residue.

Belongs to the glycosyl hydrolase 22 family.

The protein localises to the secreted. It carries out the reaction Hydrolysis of (1-&gt;4)-beta-linkages between N-acetylmuramic acid and N-acetyl-D-glucosamine residues in a peptidoglycan and between N-acetyl-D-glucosamine residues in chitodextrins.. In Homo sapiens (Human), this protein is Sperm acrosome-associated protein 5 (SPACA5).